Consider the following 202-residue polypeptide: Transcription antitermination protein NusB (202 aa).

Basic and acidic residues predominate over residues 1-11 (MTEERTADNKA). 2 disordered regions span residues 1–21 (MTEE…KRHG) and 169–202 (SAAK…SDEA).

The protein belongs to the NusB family.

In terms of biological role, involved in transcription antitermination. Required for transcription of ribosomal RNA (rRNA) genes. Binds specifically to the boxA antiterminator sequence of the ribosomal RNA (rrn) operons. The polypeptide is Transcription antitermination protein NusB (Corynebacterium jeikeium (strain K411)).